The following is a 272-amino-acid chain: Energy-coupling factor transporter ATP-binding protein EcfA1 (272 aa).

The ABC transporter domain occupies 5 to 239 (IKIDNLKYSY…RKALHENGLE (235 aa)). An ATP-binding site is contributed by 37-44 (GHNGSGKS). E163 functions as the Proton acceptor in the catalytic mechanism.

The protein belongs to the ABC transporter superfamily. Energy-coupling factor EcfA family. Forms a stable energy-coupling factor (ECF) transporter complex probably composed of 2 membrane-embedded substrate-binding proteins (S component), 2 ATP-binding proteins (A component) and 2 transmembrane proteins (T component). This complex interacts with a number of substrate-specific components, including FolT, PanT and RibU for 5-formyltetrahydrofolate, pantothenate and riboflavin respectively.

It localises to the cell membrane. Functionally, ATP-binding (A) component of a common energy-coupling factor (ECF) ABC-transporter complex. Unlike classic ABC transporters this ECF transporter provides the energy necessary to transport a number of different substrates including 5-formyltetrahydrofolate, pantothenate and riboflavin. Expression of the complex plus FolT in E.coli allows 5-formyltetrahydrofolate uptake; 5-formyltetrahydrofolate is not taken up in the absence of FolT or the EcfA1A2T complex. The protein is Energy-coupling factor transporter ATP-binding protein EcfA1 of Leuconostoc mesenteroides subsp. mesenteroides (strain ATCC 8293 / DSM 20343 / BCRC 11652 / CCM 1803 / JCM 6124 / NCDO 523 / NBRC 100496 / NCIMB 8023 / NCTC 12954 / NRRL B-1118 / 37Y).